Consider the following 442-residue polypeptide: tRNA modification GTPase MnmE (442 aa).

3 residues coordinate (6S)-5-formyl-5,6,7,8-tetrahydrofolate: arginine 24, glutamate 82, and lysine 120. A TrmE-type G domain is found at 217–367 (GLHIVITGEP…LISLIKEKAE (151 aa)). Residues 227-232 (NVGKST), 246-252 (SEYAGTT), and 271-274 (DTAG) contribute to the GTP site. The Mg(2+) site is built by serine 231 and threonine 252. Position 442 (lysine 442) interacts with (6S)-5-formyl-5,6,7,8-tetrahydrofolate.

It belongs to the TRAFAC class TrmE-Era-EngA-EngB-Septin-like GTPase superfamily. TrmE GTPase family. In terms of assembly, homodimer. Heterotetramer of two MnmE and two MnmG subunits. K(+) is required as a cofactor.

It localises to the cytoplasm. In terms of biological role, exhibits a very high intrinsic GTPase hydrolysis rate. Involved in the addition of a carboxymethylaminomethyl (cmnm) group at the wobble position (U34) of certain tRNAs, forming tRNA-cmnm(5)s(2)U34. The chain is tRNA modification GTPase MnmE from Wolbachia sp. subsp. Drosophila simulans (strain wRi).